We begin with the raw amino-acid sequence, 508 residues long: Bifunctional purine biosynthesis protein PurH (508 aa).

The MGS-like domain maps to 1–145; sequence MTKRALISVS…KNHQYVTVIV (145 aa).

The protein belongs to the PurH family.

The catalysed reaction is (6R)-10-formyltetrahydrofolate + 5-amino-1-(5-phospho-beta-D-ribosyl)imidazole-4-carboxamide = 5-formamido-1-(5-phospho-D-ribosyl)imidazole-4-carboxamide + (6S)-5,6,7,8-tetrahydrofolate. It catalyses the reaction IMP + H2O = 5-formamido-1-(5-phospho-D-ribosyl)imidazole-4-carboxamide. It functions in the pathway purine metabolism; IMP biosynthesis via de novo pathway; 5-formamido-1-(5-phospho-D-ribosyl)imidazole-4-carboxamide from 5-amino-1-(5-phospho-D-ribosyl)imidazole-4-carboxamide (10-formyl THF route): step 1/1. It participates in purine metabolism; IMP biosynthesis via de novo pathway; IMP from 5-formamido-1-(5-phospho-D-ribosyl)imidazole-4-carboxamide: step 1/1. The chain is Bifunctional purine biosynthesis protein PurH from Lysinibacillus sphaericus (strain C3-41).